The following is a 106-amino-acid chain: Large ribosomal subunit protein uL24 (106 aa).

Belongs to the universal ribosomal protein uL24 family. In terms of assembly, part of the 50S ribosomal subunit.

One of two assembly initiator proteins, it binds directly to the 5'-end of the 23S rRNA, where it nucleates assembly of the 50S subunit. Functionally, one of the proteins that surrounds the polypeptide exit tunnel on the outside of the subunit. This is Large ribosomal subunit protein uL24 from Alkalilimnicola ehrlichii (strain ATCC BAA-1101 / DSM 17681 / MLHE-1).